The sequence spans 372 residues: Spermidine/putrescine import ATP-binding protein PotA (372 aa).

The 231-residue stretch at 12–242 (IQLKGLNKSF…PTNLFVARFI (231 aa)) folds into the ABC transporter domain. 44–51 (GPSGCGKT) contacts ATP.

The protein belongs to the ABC transporter superfamily. Spermidine/putrescine importer (TC 3.A.1.11.1) family. The complex is composed of two ATP-binding proteins (PotA), two transmembrane proteins (PotB and PotC) and a solute-binding protein (PotD).

The protein resides in the cell inner membrane. The catalysed reaction is ATP + H2O + polyamine-[polyamine-binding protein]Side 1 = ADP + phosphate + polyamineSide 2 + [polyamine-binding protein]Side 1.. Functionally, part of the ABC transporter complex PotABCD involved in spermidine/putrescine import. Responsible for energy coupling to the transport system. The sequence is that of Spermidine/putrescine import ATP-binding protein PotA from Photobacterium profundum (strain SS9).